The following is a 122-amino-acid chain: Large ribosomal subunit protein uL14 (122 aa).

This sequence belongs to the universal ribosomal protein uL14 family. In terms of assembly, part of the 50S ribosomal subunit. Forms a cluster with proteins L3 and L19. In the 70S ribosome, L14 and L19 interact and together make contacts with the 16S rRNA in bridges B5 and B8.

Binds to 23S rRNA. Forms part of two intersubunit bridges in the 70S ribosome. In Lactococcus lactis subsp. lactis (strain IL1403) (Streptococcus lactis), this protein is Large ribosomal subunit protein uL14.